A 333-amino-acid polypeptide reads, in one-letter code: Phosphoribosylformylglycinamidine cyclo-ligase (333 aa).

It belongs to the AIR synthase family.

The protein localises to the cytoplasm. The enzyme catalyses 2-formamido-N(1)-(5-O-phospho-beta-D-ribosyl)acetamidine + ATP = 5-amino-1-(5-phospho-beta-D-ribosyl)imidazole + ADP + phosphate + H(+). The protein operates within purine metabolism; IMP biosynthesis via de novo pathway; 5-amino-1-(5-phospho-D-ribosyl)imidazole from N(2)-formyl-N(1)-(5-phospho-D-ribosyl)glycinamide: step 2/2. The polypeptide is Phosphoribosylformylglycinamidine cyclo-ligase (Clostridium perfringens (strain ATCC 13124 / DSM 756 / JCM 1290 / NCIMB 6125 / NCTC 8237 / Type A)).